A 322-amino-acid chain; its full sequence is Phosphoserine phosphatase (322 aa).

10 to 12 (PED) provides a ligand contact to substrate. Mg(2+)-binding residues include aspartate 12, aspartate 116, and aspartate 118. Aspartate 116 serves as the catalytic Nucleophile. Catalysis depends on aspartate 118, which acts as the Proton donor. Residues glutamate 125, arginine 161, 204-205 (SG), and lysine 249 contribute to the substrate site. Aspartate 272 contributes to the Mg(2+) binding site. Substrate is bound at residue asparagine 275.

Belongs to the HAD-like hydrolase superfamily. SerB family. Requires Mg(2+) as cofactor.

The catalysed reaction is O-phospho-L-serine + H2O = L-serine + phosphate. The enzyme catalyses O-phospho-D-serine + H2O = D-serine + phosphate. The protein operates within amino-acid biosynthesis; L-serine biosynthesis; L-serine from 3-phospho-D-glycerate: step 3/3. In terms of biological role, catalyzes the dephosphorylation of phosphoserine (P-Ser). The protein is Phosphoserine phosphatase (serB) of Escherichia coli O157:H7.